Here is a 395-residue protein sequence, read N- to C-terminus: Glutamate N-acetyltransferase (395 aa).

6 residues coordinate substrate: threonine 146, lysine 169, threonine 180, glutamate 263, asparagine 390, and threonine 395. Catalysis depends on threonine 180, which acts as the Nucleophile.

The protein belongs to the ArgJ family. In terms of assembly, heterotetramer of two alpha and two beta chains.

It is found in the cytoplasm. The catalysed reaction is N(2)-acetyl-L-ornithine + L-glutamate = N-acetyl-L-glutamate + L-ornithine. Its pathway is amino-acid biosynthesis; L-arginine biosynthesis; L-ornithine and N-acetyl-L-glutamate from L-glutamate and N(2)-acetyl-L-ornithine (cyclic): step 1/1. Catalyzes the transfer of the acetyl group from N(2)-acetylornithine to glutamate, forming N-acetylglutamate and L-ornithine. This Methanosarcina acetivorans (strain ATCC 35395 / DSM 2834 / JCM 12185 / C2A) protein is Glutamate N-acetyltransferase.